A 303-amino-acid polypeptide reads, in one-letter code: Ribosomal protein uL3 glutamine methyltransferase (303 aa).

Belongs to the protein N5-glutamine methyltransferase family. PrmB subfamily.

The catalysed reaction is L-glutaminyl-[ribosomal protein uL3] + S-adenosyl-L-methionine = N(5)-methyl-L-glutaminyl-[ribosomal protein uL3] + S-adenosyl-L-homocysteine + H(+). Its function is as follows. Methylates large ribosomal subunit protein uL3 on a specific glutamine residue. The protein is Ribosomal protein uL3 glutamine methyltransferase of Neisseria meningitidis serogroup B (strain ATCC BAA-335 / MC58).